A 78-amino-acid chain; its full sequence is Small acidic protein 2 (78 aa).

Expressed in siliques and anthers.

Mediates responses to the synthetic auxin 2,4-dichlorophenoxyacetic acid (2,4-D). Not involved in the response to indole-3-acetic acid (IAA). May interact with RUB modification-related components and may regulate the culling-ring ubiquitin E3 ligase complex (CRL) activity. The polypeptide is Small acidic protein 2 (SMAP2) (Arabidopsis thaliana (Mouse-ear cress)).